A 178-amino-acid polypeptide reads, in one-letter code: CASP-like protein 4D1 (178 aa).

Topologically, residues 1-14 (MAPPPPSPPSVTLR) are cytoplasmic. The helical transmembrane segment at 15 to 35 (TVLLLLRVLTAAFLVITVVLI) threads the bilayer. Topologically, residues 36–60 (STNTVTLEVSSTSIKMRFNDVYAYR) are extracellular. Residues 61–81 (YMLSAAVIGLLYAVVQLFLTI) form a helical membrane-spanning segment. The Cytoplasmic segment spans residues 82–149 (SQFATGTTHP…KFFSKGYASA (68 aa)). The helical transmembrane segment at 150–170 (SLLLFAFVSLAVLSVFSSLAL) threads the bilayer. The Extracellular segment spans residues 171–178 (SKRPIQVS).

It belongs to the Casparian strip membrane proteins (CASP) family. In terms of assembly, homodimer and heterodimers.

It is found in the cell membrane. This Arabidopsis lyrata subsp. lyrata (Lyre-leaved rock-cress) protein is CASP-like protein 4D1.